The sequence spans 192 residues: Fibroblast growth factor 4B (192 aa).

Positions 1-22 (MTVQLALVPILLLGTAAVMVHC) are cleaved as a signal peptide.

The protein belongs to the heparin-binding growth factors family.

It localises to the secreted. Functionally, plays an important role in the regulation of embryonic development, cell proliferation, and cell differentiation. Good candidate for an inducing factor with possible roles both in mesoderm induction at the blastula stage and in the formation of the anteroposterior axis at the gastrula stage. This chain is Fibroblast growth factor 4B (fgf4-b), found in Xenopus laevis (African clawed frog).